Consider the following 100-residue polypeptide: Large ribosomal subunit protein eL21 (100 aa).

Residues 1 to 21 (MVKRTHGYRYKSRKLLRKKPR) show a composition bias toward basic residues. The interval 1-22 (MVKRTHGYRYKSRKLLRKKPRE) is disordered.

The protein belongs to the eukaryotic ribosomal protein eL21 family.

This chain is Large ribosomal subunit protein eL21, found in Pyrobaculum neutrophilum (strain DSM 2338 / JCM 9278 / NBRC 100436 / V24Sta) (Thermoproteus neutrophilus).